A 473-amino-acid polypeptide reads, in one-letter code: Ribosomal protein uS12 methylthiotransferase RimO (473 aa).

The MTTase N-terminal domain occupies 30–141 (ASVAVLHLGC…IVQIIERVER (112 aa)). [4Fe-4S] cluster contacts are provided by Cys-39, Cys-75, Cys-104, Cys-179, Cys-183, and Cys-186. Positions 165 to 394 (TTHAPVAYLR…MQVQQGITFR (230 aa)) constitute a Radical SAM core domain. One can recognise a TRAM domain in the interval 397–463 (REQVGRVVPV…PYDLFGQVVA (67 aa)).

The protein belongs to the methylthiotransferase family. RimO subfamily. Requires [4Fe-4S] cluster as cofactor.

It localises to the cytoplasm. The catalysed reaction is L-aspartate(89)-[ribosomal protein uS12]-hydrogen + (sulfur carrier)-SH + AH2 + 2 S-adenosyl-L-methionine = 3-methylsulfanyl-L-aspartate(89)-[ribosomal protein uS12]-hydrogen + (sulfur carrier)-H + 5'-deoxyadenosine + L-methionine + A + S-adenosyl-L-homocysteine + 2 H(+). Catalyzes the methylthiolation of an aspartic acid residue of ribosomal protein uS12. The polypeptide is Ribosomal protein uS12 methylthiotransferase RimO (Synechococcus sp. (strain JA-2-3B'a(2-13)) (Cyanobacteria bacterium Yellowstone B-Prime)).